A 187-amino-acid chain; its full sequence is MIKEILEKTGALMEGHFILSSGKHSSRYVQCARLFEFPEYGDVVGEELAKLLKKYDVETVVGPAMGGVILSYVVARYLKARSLFAERENGVMKLRRGFFVKPGEKVAVVEDVVTTGGSVKEVIELLKEYGANVVCVGSIIDRSGGKVDFGVPFESLLKLDLPVYDPEDCPLCKQGIPAEKPGSRGLK.

110–118 provides a ligand contact to 5-phospho-alpha-D-ribose 1-diphosphate; sequence EDVVTTGGS. Orotate contacts are provided by T114 and R142.

Belongs to the purine/pyrimidine phosphoribosyltransferase family. PyrE subfamily. Homodimer. Mg(2+) is required as a cofactor.

It carries out the reaction orotidine 5'-phosphate + diphosphate = orotate + 5-phospho-alpha-D-ribose 1-diphosphate. Its pathway is pyrimidine metabolism; UMP biosynthesis via de novo pathway; UMP from orotate: step 1/2. Catalyzes the transfer of a ribosyl phosphate group from 5-phosphoribose 1-diphosphate to orotate, leading to the formation of orotidine monophosphate (OMP). This is Orotate phosphoribosyltransferase from Thermotoga maritima (strain ATCC 43589 / DSM 3109 / JCM 10099 / NBRC 100826 / MSB8).